A 1034-amino-acid chain; its full sequence is Glycine dehydrogenase (decarboxylating) B, mitochondrial (1034 aa).

A mitochondrion-targeting transit peptide spans 1-63; sequence MERARRLAIL…LNGFGSQVRT (63 aa). K770 carries the post-translational modification N6-(pyridoxal phosphate)lysine.

The protein belongs to the GcvP family. In terms of assembly, homodimer. The glycine cleavage system is composed of four proteins: P, T, L and H. Requires pyridoxal 5'-phosphate as cofactor.

The protein resides in the mitochondrion. It carries out the reaction N(6)-[(R)-lipoyl]-L-lysyl-[glycine-cleavage complex H protein] + glycine + H(+) = N(6)-[(R)-S(8)-aminomethyldihydrolipoyl]-L-lysyl-[glycine-cleavage complex H protein] + CO2. In terms of biological role, the glycine cleavage system catalyzes the degradation of glycine. The P protein binds the alpha-amino group of glycine through its pyridoxal phosphate cofactor; CO(2) is released and the remaining methylamine moiety is then transferred to the lipoamide cofactor of the H protein. The protein is Glycine dehydrogenase (decarboxylating) B, mitochondrial (GDCSPB) of Flaveria pringlei.